Consider the following 246-residue polypeptide: MIVQHRTAPVTGSAHFAFTDRWGGVSAAPYGELNLGGAVGDDPAAVGANRERAARHLGLDPAHVVWMNQVHGRDVAVVDGPWGADAEIPAVDAVVTARRGLALAVLTADCTPVLLADPVAGVVGAAHAGRPGLVAGVVSAAVEAMVALGAHPSRITAHTGPAVCGRCYEVPEEMRAEVAGAVPGTWSETSWGTPAVDVTGGVHAQLAALGVTDRHASPFCTLESGDHFSYRRDRTTGRLAGYVWLD.

Zn(2+) is bound by residues His-71, Cys-110, and His-127.

Belongs to the purine nucleoside phosphorylase YfiH/LACC1 family. In terms of assembly, homodimer. Cu(2+) is required as a cofactor. It depends on Zn(2+) as a cofactor.

It carries out the reaction adenosine + phosphate = alpha-D-ribose 1-phosphate + adenine. The catalysed reaction is S-methyl-5'-thioadenosine + phosphate = 5-(methylsulfanyl)-alpha-D-ribose 1-phosphate + adenine. It catalyses the reaction inosine + phosphate = alpha-D-ribose 1-phosphate + hypoxanthine. The enzyme catalyses adenosine + H2O + H(+) = inosine + NH4(+). In terms of biological role, purine nucleoside enzyme that catalyzes the phosphorolysis of adenosine and inosine nucleosides, yielding D-ribose 1-phosphate and the respective free bases, adenine and hypoxanthine. Also catalyzes the phosphorolysis of S-methyl-5'-thioadenosine into adenine and S-methyl-5-thio-alpha-D-ribose 1-phosphate. Also has adenosine deaminase activity. The chain is Purine nucleoside phosphorylase ORF3 from Streptomyces griseus.